Reading from the N-terminus, the 458-residue chain is BPI fold-containing family B member 2 (458 aa).

A signal peptide spans 1–20 (MAWASRLGLLLALLLPVVGA). Thr-52 is subject to Phosphothreonine; by FAM20C. Ser-60 bears the Phosphoserine; by FAM20C mark. 4 N-linked (GlcNAc...) asparagine glycosylation sites follow: Asn-96, Asn-151, Asn-293, and Asn-332. Residues Cys-137 and Cys-174 are joined by a disulfide bond.

Belongs to the BPI/LBP/Plunc superfamily. BPI/LBP family. In terms of tissue distribution, highly expressed in tonsils, especially in hypertrophic tonsils. Detected at very low levels in fetal liver.

Its subcellular location is the secreted. This Homo sapiens (Human) protein is BPI fold-containing family B member 2 (BPIFB2).